A 269-amino-acid polypeptide reads, in one-letter code: MITTKTVNGVQIAFDDQGHEPGPVFVTLSGWAHDLRAYDGMLPYLRAAQRTVRVCWRGHGPDRNLVGDFGIDEMAADTIGLLDALEVDSFVPIAHAHGGWAALEIADRLGAQRVPAVMILDLIMTPAPREFVAALHGIQDPERWKEGRDGLVQSWLAGTTNQAVLDHVRYDSGGHGFDMWARAGRVIDEAYRTWGSPMRRMEALAEPCAIRHVFSHPKIGEYDALHDDFAARHPWFSYRRLGGETHFPGIELPQQVAAEAIDLLAGARI.

A substrate-binding site is contributed by His97. The Proton donor/acceptor role is filled by His246.

Belongs to the AB hydrolase superfamily. In terms of assembly, monomer.

The enzyme catalyses 2-heptyl-3-hydroxy-4(1H)-quinolone + O2 = N-octanoylanthranilate + CO + H(+). Functionally, ring-cleaving dioxygenase involved in the degradation pathway of the Pseudomonas aeruginosa quorum sensing signal molecules HHQ (2-heptyl-4-quinolone) and PQS (2-heptyl-3-hydroxy-4(1H)-quinolone) to anthranilate. Catalyzes the cleavage of PQS to form N-octanoylanthranilate and carbon monoxide. Thus, leads to the inactivation of PQS that plays a central role in the regulation of virulence factor production by P.aeruginosa, thereby quenching the production of antimicrobials, which may contribute to the competitiveness of M.abscessus in presence of P.aeruginosa. In vitro, can also use other 2-alkyl-3-hydroxy-4(1H)-quinolone (AHQ) substrates with shorter alkyl substituents at C2, but with lower efficiency. The sequence is that of 2-heptyl-3-hydroxy-4(1H)-quinolone dioxygenase from Mycobacteroides abscessus (strain ATCC 19977 / DSM 44196 / CCUG 20993 / CIP 104536 / JCM 13569 / NCTC 13031 / TMC 1543 / L948) (Mycobacterium abscessus).